Here is a 337-residue protein sequence, read N- to C-terminus: DNA-directed RNA polymerase subunit alpha (337 aa).

The tract at residues 1–233 (MVREEVAGST…DLFLPFLHTE (233 aa)) is alpha N-terminal domain (alpha-NTD). The segment at 267 to 337 (IPLNCIFIDQ…LPMDLPKNKF (71 aa)) is alpha C-terminal domain (alpha-CTD).

The protein belongs to the RNA polymerase alpha chain family. In terms of assembly, in plastids the minimal PEP RNA polymerase catalytic core is composed of four subunits: alpha, beta, beta', and beta''. When a (nuclear-encoded) sigma factor is associated with the core the holoenzyme is formed, which can initiate transcription.

Its subcellular location is the plastid. It is found in the chloroplast. The enzyme catalyses RNA(n) + a ribonucleoside 5'-triphosphate = RNA(n+1) + diphosphate. Functionally, DNA-dependent RNA polymerase catalyzes the transcription of DNA into RNA using the four ribonucleoside triphosphates as substrates. This chain is DNA-directed RNA polymerase subunit alpha, found in Oryza nivara (Indian wild rice).